A 35-amino-acid chain; its full sequence is Probable endonuclease 4 (35 aa).

Position 15 (E15) interacts with Zn(2+).

This sequence belongs to the AP endonuclease 2 family. Zn(2+) serves as cofactor.

The catalysed reaction is Endonucleolytic cleavage to 5'-phosphooligonucleotide end-products.. Endonuclease IV plays a role in DNA repair. It cleaves phosphodiester bonds at apurinic or apyrimidinic (AP) sites, generating a 3'-hydroxyl group and a 5'-terminal sugar phosphate. This is Probable endonuclease 4 (nfo) from Yersinia enterocolitica.